The chain runs to 147 residues: D-aminoacyl-tRNA deacylase (147 aa).

The Gly-cisPro motif, important for rejection of L-amino acids signature appears at 136–137; the sequence is GP.

It belongs to the DTD family. Homodimer.

It is found in the cytoplasm. The enzyme catalyses glycyl-tRNA(Ala) + H2O = tRNA(Ala) + glycine + H(+). The catalysed reaction is a D-aminoacyl-tRNA + H2O = a tRNA + a D-alpha-amino acid + H(+). An aminoacyl-tRNA editing enzyme that deacylates mischarged D-aminoacyl-tRNAs. Also deacylates mischarged glycyl-tRNA(Ala), protecting cells against glycine mischarging by AlaRS. Acts via tRNA-based rather than protein-based catalysis; rejects L-amino acids rather than detecting D-amino acids in the active site. By recycling D-aminoacyl-tRNA to D-amino acids and free tRNA molecules, this enzyme counteracts the toxicity associated with the formation of D-aminoacyl-tRNA entities in vivo and helps enforce protein L-homochirality. This Streptococcus uberis (strain ATCC BAA-854 / 0140J) protein is D-aminoacyl-tRNA deacylase.